Consider the following 1498-residue polypeptide: Golgin subfamily A member 3 (1498 aa).

Residue Met-1 is modified to N-acetylmethionine. Positions 1–118 (MDGASAEQDG…GTSAEGSVRK (118 aa)) are disordered. The residue at position 18 (Ser-18) is a Phosphoserine. Residues 27–36 (PLKPPGPLVP) are compositionally biased toward pro residues. Ser-57 is modified (phosphoserine). Pro residues predominate over residues 71-81 (PTPPFPDPPSS). The tract at residues 121 to 141 (LQSLRLSLPMQETQLCSTDSP) is interaction with GOPC. Disordered regions lie at residues 166-195 (RVKR…MLNP) and 216-325 (SVPR…SAST). The segment at 172-257 (ERSSQPATKT…DYRTEDSNAG (86 aa)) is golgi-targeting domain. Polar residues-rich tracts occupy residues 173–184 (RSSQPATKTRLF) and 269–291 (TKGS…SLSP). A Phosphoserine modification is found at Ser-272. Residues 315–324 (SDSSSYSSAS) show a composition bias toward low complexity. Phosphoserine is present on residues Ser-385, Ser-389, and Ser-465. A coiled-coil region spans residues 394–1459 (VSLESSAAET…ALTVHESLSS (1066 aa)). Residues 789-801 (KEELDRGARRLEE) show a composition bias toward basic and acidic residues. Disordered regions lie at residues 789–809 (KEEL…TSET), 974–993 (QKQK…KEMK), 1376–1400 (RGAA…PIKI), and 1440–1498 (DSLQ…GPGE). Ser-983 bears the Phosphoserine mark. The segment covering 1376 to 1387 (RGAAKTRKEPKG) has biased composition (basic and acidic residues). Ser-1392 bears the Phosphoserine mark. Residues 1440–1452 (DSLQRQMEEHALT) are compositionally biased toward basic and acidic residues.

As to quaternary structure, homodimer. Interacts with GOLGA7. Isoform 1 interacts with GOPC while isoform 3 does not. In terms of processing, cleaved by caspases in apoptotic cells. Expressed in all tissues tested. Expressed in liver, testis, lung, heart, salivary gland and kidney.

The protein resides in the cytoplasm. It is found in the golgi apparatus. It localises to the golgi stack membrane. Functionally, golgi auto-antigen; probably involved in maintaining Golgi structure. This chain is Golgin subfamily A member 3 (GOLGA3), found in Homo sapiens (Human).